A 165-amino-acid chain; its full sequence is Small ribosomal subunit protein uS13 (165 aa).

The segment at 139–165 is disordered; the sequence is GMTIGVARKKAAQPQSQQSSSQQQKSS. Positions 153–165 are enriched in low complexity; the sequence is QSQQSSSQQQKSS.

It belongs to the universal ribosomal protein uS13 family. Part of the 30S ribosomal subunit. Forms a loose heterodimer with protein S19. Forms two bridges to the 50S subunit in the 70S ribosome.

Functionally, located at the top of the head of the 30S subunit, it contacts several helices of the 16S rRNA. In the 70S ribosome it contacts the 23S rRNA (bridge B1a) and protein L5 of the 50S subunit (bridge B1b), connecting the 2 subunits; these bridges are implicated in subunit movement. This Saccharolobus solfataricus (strain ATCC 35092 / DSM 1617 / JCM 11322 / P2) (Sulfolobus solfataricus) protein is Small ribosomal subunit protein uS13.